We begin with the raw amino-acid sequence, 248 residues long: Glutathione S-transferase omega-2 (248 aa).

Positions 22 to 101 (GVIRIYSMRF…YLDDVFPGRK (80 aa)) constitute a GST N-terminal domain. The active-site Nucleophile is cysteine 32. Glutathione contacts are provided by residues lysine 59, valine 72, and 85-86 (ES). Residues 106-231 (DPYERARQKM…IFLGFLNLYF (126 aa)) enclose the GST C-terminal domain.

This sequence belongs to the GST superfamily. Omega family.

It carries out the reaction RX + glutathione = an S-substituted glutathione + a halide anion + H(+). It catalyses the reaction L-dehydroascorbate + 2 glutathione = glutathione disulfide + L-ascorbate. The catalysed reaction is methylarsonate + 2 glutathione + H(+) = methylarsonous acid + glutathione disulfide + H2O. Functionally, exhibits glutathione-dependent thiol transferase activity. Has high dehydroascorbate reductase activity and may contribute to the recycling of ascorbic acid. Participates in the biotransformation of inorganic arsenic and reduces monomethylarsonic acid (MMA). The chain is Glutathione S-transferase omega-2 (Gsto2) from Rattus norvegicus (Rat).